Here is a 399-residue protein sequence, read N- to C-terminus: Developmentally-regulated G-protein 1 (399 aa).

Residues 63-288 enclose the OBG-type G domain; the sequence is GRVALIGFPS…LLARMWDEMG (226 aa). Residues 69-76, 115-119, and 246-249 contribute to the GTP site; these read GFPSVGKS, DLPGI, and NKID. Residues 288 to 366 form the TGS domain; it reads GLVRVYSKPQ…EDEDVVQIVK (79 aa). The interval 367–399 is disordered; the sequence is KKERDEGGRGRFKSHSNAPARIADREKKAPLKQ. Residues 388–399 show a composition bias toward basic and acidic residues; sequence IADREKKAPLKQ.

This sequence belongs to the TRAFAC class OBG-HflX-like GTPase superfamily. OBG GTPase family. As to expression, expressed in actively growing tissues and reproductive organs. Mostly expressed in leaves, stems and siliques. Also present in flowers and flower buds, and, to a lower extent, in roots.

Its subcellular location is the cytoplasmic vesicle. It localises to the cytoplasm. Functionally, binds GDP and GTP, and has low GTPase activity. May interact with phosphatidic acid (PA). The sequence is that of Developmentally-regulated G-protein 1 (DRG1) from Arabidopsis thaliana (Mouse-ear cress).